Consider the following 356-residue polypeptide: MFS-type transporter tazK (356 aa).

The next 9 membrane-spanning stretches (helical) occupy residues 12-32 (LPFFLGYVLFVLSQIPVALGH), 42-62 (FLGGVTSSVCPAITGGWLADF), 69-89 (GVAVAIFAATTLVGPSIGAIT), 102-122 (MTAWTTMILGIVSGVAGFIIL), 178-198 (ILLSMTIYISFTFGLIYLLFV), 211-231 (GAIDGTLPLLSICAGIIVGAF), 257-277 (LHPMIVGAVSLAIGLLWFAWT), 288-308 (ILAGIPIGVGVQVILLQSLAY), and 320-340 (AISGTMIVRSLVGGTFPLFAP).

This sequence belongs to the major facilitator superfamily. CAR1 family.

It localises to the membrane. Functionally, MFS-type transporter; part of the gene cluster that mediates the biosynthesis of azaterrilone A and other azaphilones, a class of fungal metabolites characterized by a highly oxygenated pyrano-quinone bicyclic core and exhibiting a broad range of bioactivities. The polypeptide is MFS-type transporter tazK (Aspergillus terreus (strain NIH 2624 / FGSC A1156)).